We begin with the raw amino-acid sequence, 135 residues long: Hemoglobin subunit beta-2 (135 aa).

One can recognise a Globin domain in the interval 2-135; that stretch reads HWTAEEKALV…VVDALSKGYH (134 aa). 2 residues coordinate heme b: His57 and His81.

This sequence belongs to the globin family. As to quaternary structure, hb 2 is a heterotetramer of two alpha and two beta-2 chains. Red blood cells (at protein level).

In terms of biological role, involved in oxygen transport from gills to the various peripheral tissues. This chain is Hemoglobin subunit beta-2, found in Somniosus microcephalus (Greenland sleeper shark).